We begin with the raw amino-acid sequence, 511 residues long: Aldehyde dehydrogenase 2, mitochondrial (511 aa).

A mitochondrion-targeting transit peptide spans 1–21; the sequence is MSKSKTKTDKRNQSSLSRIKL. The disordered stretch occupies residues 72–92; it reads VSEKSQHDSTEEDITQVSEKS. 274 to 279 contributes to the NAD(+) binding site; it reads GSTLVG. Glu-297 acts as the Proton acceptor in catalysis. Residue Cys-331 is the Nucleophile of the active site.

Belongs to the aldehyde dehydrogenase family.

The protein localises to the mitochondrion matrix. The enzyme catalyses an aldehyde + NAD(+) + H2O = a carboxylate + NADH + 2 H(+). The protein operates within alcohol metabolism; ethanol degradation; acetate from ethanol: step 2/2. In Saccharomyces cerevisiae (Baker's yeast), this protein is Aldehyde dehydrogenase 2, mitochondrial (ALD2).